A 693-amino-acid chain; its full sequence is MFRGGEKMRQIPKEVIEEVERLREEIEYHNYRYYVLNDPVITDEEYDRLMRRLIELERMYPELVTPDSPTQRVGGKVLEGFKTVKHSVPMLSLDNTYNEEEIIEFDKRVKKTLQESEVEYVAELKIDGVSIALRYENGRFVLGATRGDGVEGEDVSENVKTIRSVPLRLRKPLTIEVRGEIYMPVDEFKRLNEEREEEGLPPFANPRNAAAGTLRQLNTALVASRRLDSFIYYVVHPENYGLKTQWEALQFLKEIGFKVNPHSRLCKNIQEVIEYWREWKERKRELDYWVDGVVVKVNRFDFQKVLGETSKAPRWAIAFKFPAEQARTRILDVTIQVGRTGVLTPVAELEPVQLAGTIVKRASLHNFEYIREKDIRIGDYVFVEKAGGIIPQIVKSIPELRTGSEKEIKPPQSCPVCGGKVGKLSPDEVAIRCLNPHCPAKLKRALRTFVSREALDIEGLGEKIIDRLVDSGLVKDIADIFYLTPFDLAQLGPGIGQRTIAKILQEIEEAKKRPLHKLITGLGIPMVGQKTAKILAEHFKSLEAIAEASYETLKDIPGIGPEIARSIVEYFRNPKTREIIEKLKKAGVKLEEKTVKYDVLKGLTFAVTGTLKNFTREEIIEFLERLGARVVNSVSKNTDYLIVGENPGSKYEKAKALKVKTMSEEEFLRFVENRAKLKGYNFDEIMRGWKEWS.

NAD(+) contacts are provided by residues 43 to 47 (DEEYD), 92 to 93 (SL), and glutamate 123. The active-site N6-AMP-lysine intermediate is the lysine 125. NAD(+) is bound by residues arginine 146, glutamate 180, lysine 296, and lysine 320. Zn(2+) contacts are provided by cysteine 414, cysteine 417, cysteine 433, and cysteine 438. Residues 595-684 (VKYDVLKGLT…AKLKGYNFDE (90 aa)) enclose the BRCT domain.

The protein belongs to the NAD-dependent DNA ligase family. LigA subfamily. Mg(2+) is required as a cofactor. Mn(2+) serves as cofactor.

It carries out the reaction NAD(+) + (deoxyribonucleotide)n-3'-hydroxyl + 5'-phospho-(deoxyribonucleotide)m = (deoxyribonucleotide)n+m + AMP + beta-nicotinamide D-nucleotide.. Its function is as follows. DNA ligase that catalyzes the formation of phosphodiester linkages between 5'-phosphoryl and 3'-hydroxyl groups in double-stranded DNA using NAD as a coenzyme and as the energy source for the reaction. It is essential for DNA replication and repair of damaged DNA. The sequence is that of DNA ligase from Thermotoga neapolitana (strain ATCC 49049 / DSM 4359 / NBRC 107923 / NS-E).